The chain runs to 122 residues: Ribosomal silencing factor RsfS (122 aa).

Belongs to the Iojap/RsfS family. In terms of assembly, interacts with ribosomal protein uL14 (rplN).

Its subcellular location is the cytoplasm. In terms of biological role, functions as a ribosomal silencing factor. Interacts with ribosomal protein uL14 (rplN), blocking formation of intersubunit bridge B8. Prevents association of the 30S and 50S ribosomal subunits and the formation of functional ribosomes, thus repressing translation. This is Ribosomal silencing factor RsfS from Chromobacterium violaceum (strain ATCC 12472 / DSM 30191 / JCM 1249 / CCUG 213 / NBRC 12614 / NCIMB 9131 / NCTC 9757 / MK).